Consider the following 250-residue polypeptide: ATP synthase subunit a (250 aa).

6 helical membrane passes run 29 to 49, 84 to 104, 114 to 134, 143 to 163, 185 to 205, and 208 to 228; these read ASLF…FATS, FFPL…LGMV, IIVT…YGFI, LFVP…IEII, ITLK…ALGI, and AILP…VAFL.

The protein belongs to the ATPase A chain family. As to quaternary structure, F-type ATPases have 2 components, CF(1) - the catalytic core - and CF(0) - the membrane proton channel. CF(1) has five subunits: alpha(3), beta(3), gamma(1), delta(1), epsilon(1). CF(0) has three main subunits: a(1), b(2) and c(9-12). The alpha and beta chains form an alternating ring which encloses part of the gamma chain. CF(1) is attached to CF(0) by a central stalk formed by the gamma and epsilon chains, while a peripheral stalk is formed by the delta and b chains.

It localises to the cell inner membrane. Its function is as follows. Key component of the proton channel; it plays a direct role in the translocation of protons across the membrane. This chain is ATP synthase subunit a, found in Rhizobium rhizogenes (strain K84 / ATCC BAA-868) (Agrobacterium radiobacter).